The sequence spans 88 residues: Small ribosomal subunit protein uS15c (88 aa).

Belongs to the universal ribosomal protein uS15 family. Part of the 30S ribosomal subunit.

It localises to the plastid. The protein resides in the chloroplast. The chain is Small ribosomal subunit protein uS15c (rps15) from Capsella bursa-pastoris (Shepherd's purse).